The following is a 484-amino-acid chain: HTH-type transcriptional regulator TauR (484 aa).

Residues 16-84 enclose the HTH gntR-type domain; it reads GSLQHRLRQM…GRSGTFVSAA (69 aa). Residues 44–63 constitute a DNA-binding region (H-T-H motif); sequence TRALAAHLGVARITVTLAYA. Position 330 is an N6-(pyridoxal phosphate)lysine (Lys-330).

It in the C-terminal section; belongs to the class-I pyridoxal-phosphate-dependent aminotransferase family. It depends on pyridoxal 5'-phosphate as a cofactor.

Transcriptional activator, which is essential for taurine-dependent expression of the tpa-tauR-xsc operon. Acts by binding to direct repeats in the promoter region. This is HTH-type transcriptional regulator TauR from Rhodobacter capsulatus (strain ATCC BAA-309 / NBRC 16581 / SB1003).